A 570-amino-acid polypeptide reads, in one-letter code: Phosphoribosylaminoimidazole carboxylase (570 aa).

Positions 110-297 (KQHLVKNRIP…QFEAHLRAIL (188 aa)) constitute an ATP-grasp domain. 137–192 (GSSLGYPFVLKSRTLAYDGRGNFVVKSEEDIEKGLEFLANRPLYAEKWASFKKELS) lines the ATP pocket.

This sequence in the C-terminal section; belongs to the AIR carboxylase family. Class I subfamily.

It carries out the reaction 5-amino-1-(5-phospho-D-ribosyl)imidazole-4-carboxylate + H(+) = 5-amino-1-(5-phospho-beta-D-ribosyl)imidazole + CO2. It participates in purine metabolism; IMP biosynthesis via de novo pathway; 5-amino-1-(5-phospho-D-ribosyl)imidazole-4-carboxylate from 5-amino-1-(5-phospho-D-ribosyl)imidazole (carboxylase route): step 1/1. The chain is Phosphoribosylaminoimidazole carboxylase (ADE2) from Candida glabrata (strain ATCC 2001 / BCRC 20586 / JCM 3761 / NBRC 0622 / NRRL Y-65 / CBS 138) (Yeast).